A 689-amino-acid polypeptide reads, in one-letter code: Polyribonucleotide nucleotidyltransferase (689 aa).

Positions 482 and 488 each coordinate Mg(2+). One can recognise a KH domain in the interval 549–608 (PRMITLTIPQNKIGELIGPGGKNIRKIQEDNNVKIDIEETGRVFISGVESDGVKSAKEYV). Positions 618–686 (GKIYKSRVTK…KQGRINLSIK (69 aa)) constitute an S1 motif domain.

It belongs to the polyribonucleotide nucleotidyltransferase family. It depends on Mg(2+) as a cofactor.

The protein resides in the cytoplasm. The enzyme catalyses RNA(n+1) + phosphate = RNA(n) + a ribonucleoside 5'-diphosphate. Functionally, involved in mRNA degradation. Catalyzes the phosphorolysis of single-stranded polyribonucleotides processively in the 3'- to 5'-direction. The chain is Polyribonucleotide nucleotidyltransferase from Endomicrobium trichonymphae.